A 490-amino-acid chain; its full sequence is Cyclin-T1-3 (490 aa).

Disordered regions lie at residues 275-391 (RVAP…GDVA) and 414-490 (AAED…RLRS). Polar residues-rich tracts occupy residues 282–298 (QGND…NQRA) and 352–365 (TANS…SSTM). 2 stretches are compositionally biased toward basic and acidic residues: residues 367-391 (AMKK…GDVA) and 457-490 (QEYR…RLRS).

Belongs to the cyclin family. Cyclin T subfamily.

This is Cyclin-T1-3 (CYCT1-3) from Oryza sativa subsp. japonica (Rice).